Consider the following 293-residue polypeptide: Glutamyl-Q tRNA(Asp) synthetase (293 aa).

L-glutamate-binding positions include 8-12 (RFAPS) and Glu44. Positions 11-21 (PSPSGPLHAGS) match the 'HIGH' region motif. Zn(2+) contacts are provided by Cys98, Cys100, Tyr120, and Cys124. 2 residues coordinate L-glutamate: Tyr183 and Arg201. Positions 239–243 (KLSKQ) match the 'KMSKS' region motif. Position 242 (Lys242) interacts with ATP.

It belongs to the class-I aminoacyl-tRNA synthetase family. GluQ subfamily. It depends on Zn(2+) as a cofactor.

In terms of biological role, catalyzes the tRNA-independent activation of glutamate in presence of ATP and the subsequent transfer of glutamate onto a tRNA(Asp). Glutamate is transferred on the 2-amino-5-(4,5-dihydroxy-2-cyclopenten-1-yl) moiety of the queuosine in the wobble position of the QUC anticodon. This chain is Glutamyl-Q tRNA(Asp) synthetase, found in Janthinobacterium sp. (strain Marseille) (Minibacterium massiliensis).